The chain runs to 2176 residues: Protein sidekick-2 (2176 aa).

Positions methionine 1 to alanine 24 are cleaved as a signal peptide. The Extracellular segment spans residues glutamine 25–phenylalanine 1936. 6 consecutive Ig-like C2-type domains span residues proline 30–glutamine 112, glycine 117–threonine 204, proline 219–alanine 298, proline 312–threonine 402, proline 406–valine 495, and threonine 500–arginine 589. A disulfide bridge links cysteine 52 with cysteine 95. N-linked (GlcNAc...) asparagine glycosylation occurs at asparagine 197. Intrachain disulfides connect cysteine 241–cysteine 288, cysteine 334–cysteine 384, cysteine 427–cysteine 479, and cysteine 521–cysteine 573. Fibronectin type-III domains are found at residues alanine 596 to glutamate 692, proline 697 to glycine 793, proline 798 to aspartate 897, proline 901 to glutamate 995, alanine 999 to alanine 1098, alanine 1103 to serine 1201, glycine 1206 to aspartate 1303, proline 1307 to arginine 1401, proline 1406 to alanine 1503, alanine 1508 to alanine 1625, alanine 1630 to alanine 1726, alanine 1730 to glycine 1825, and alanine 1828 to phenylalanine 1930. Residue asparagine 747 is glycosylated (N-linked (GlcNAc...) asparagine). N-linked (GlcNAc...) asparagine glycosylation is found at asparagine 940 and asparagine 952. Asparagine 1106 carries an N-linked (GlcNAc...) asparagine glycan. Asparagine 1592 carries N-linked (GlcNAc...) asparagine glycosylation. The tract at residues aspartate 1712–valine 1734 is disordered. Polar residues predominate over residues serine 1716–alanine 1727. The helical transmembrane segment at leucine 1937–isoleucine 1957 threads the bilayer. The Cytoplasmic portion of the chain corresponds to arginine 1958 to valine 2176. Disordered regions lie at residues glycine 2013 to glutamate 2032, alanine 2043 to asparagine 2070, and glutamine 2102 to valine 2176. Composition is skewed to polar residues over residues glutamate 2044–asparagine 2070 and valine 2119–serine 2129. Residues alanine 2170–valine 2176 carry the PDZ-binding motif.

It belongs to the sidekick family. As to quaternary structure, homodimer; mediates homophilic interactions to promote cell adhesion. Interacts (via PDZ-binding motif) with MAGI1, MAGI2, DLG2, DLG3 and DLG4. Expressed in retinal ganglion cells (RGCs) that form synapses in distinct inner plexiform layer (IPL) sublaminae. Specifically expressed in specific subsets of retinal ganglion cells (RGCs), named W3B-RGCs, that specifically respond when the timing of the movement of a small object differs from that of the background, but not when they coincide (at protein level). Also present in excitatory amacrine cell type called VG3-ACs, that provide strong and selective input W3B-RGCs (at protein level). Expressed at low levels in the glomeruli.

It localises to the cell membrane. It is found in the synapse. Adhesion molecule that promotes lamina-specific synaptic connections in the retina and is specifically required for the formation of neuronal circuits that detect motion. Acts by promoting formation of synapses between two specific retinal cell types: the retinal ganglion cells W3B-RGCs and the excitatory amacrine cells VG3-ACs. Formation of synapses between these two cells plays a key role in detection of motion. Promotes synaptic connectivity via homophilic interactions. The sequence is that of Protein sidekick-2 from Mus musculus (Mouse).